We begin with the raw amino-acid sequence, 478 residues long: MACLNPVPKLYRSVIEDVIEGVRNLFAEEGIEEQVLKDLKQLWETKVLQSKATEDFFRNSIQSPLFTLQLPHSLHQTLQSSTASLVIPAGRTLPSFTTAELGTSNSSANFTFPGYPIHVPAGVTLQTVSGHLYKVNVPIMVTETSGRAGILQHPIQQVFQQLGQPSVIQTSVPQLNPWSLQATTEKSQRIETVLQQPAILPSGPVDRKHLENATSDILVSPGNEHKIVPEALLCHQESSHYISLPGVVFSPQVSQTNSNVESVLSGSASMAQNLHDESLSTSPHGALHQHVTDIQLHILKNRMYGCDSVKQPRNIEEPSNIPVSEKDSNSQVDLSIRVTDDDIGEIIQVDGSGDTSSNEEIGSTRDADENEFLGNIDGGDLKVPEEEADSISNEDSATNSSDNEDPQVNIVEEDPLNSGDDVSEQDVPDLFDTDNVIVCQYDKIHRSKNKWKFYLKDGVMCFGGRDYVFAKAIGDAEW.

The interval 309–427 is disordered; it reads VKQPRNIEEP…SGDDVSEQDV (119 aa). A compositionally biased stretch (polar residues) spans 390–401; sequence SISNEDSATNSS. Positions 411 to 427 are enriched in acidic residues; sequence VEEDPLNSGDDVSEQDV.

The protein belongs to the TFIIA subunit 1 family. As to expression, testis specific. Detected in adult testis mostly in round and elongating spermatids (at protein level). Detected in testis.

The protein resides in the nucleus. In terms of biological role, may function as a testis specific transcription factor. Binds DNA in conjunction with GTF2A2 and TBP (the TATA-binding protein) and together with GTF2A2, allows mRNA transcription. This is TFIIA-alpha and beta-like factor (GTF2A1L) from Homo sapiens (Human).